The chain runs to 290 residues: Feruloyl esterase D (290 aa).

Positions 1–25 (MAGLHSRLTTFLLLLLSALPAIAAA) are cleaved as a signal peptide. The interval 260–280 (HGGDHNPSQRDPGQNDPFAPR) is disordered.

Belongs to the serine esterase family.

Its subcellular location is the secreted. The enzyme catalyses feruloyl-polysaccharide + H2O = ferulate + polysaccharide.. Involved in degradation of plant cell walls. Hydrolyzes the feruloyl-arabinose ester bond in arabinoxylans as well as the feruloyl-galactose and feruloyl-arabinose ester bonds in pectin. Active against methyl esters of ferulate (MFA), sinapate (MSA), caffeate (MCA) and p-coumarate (MpCA). The polypeptide is Feruloyl esterase D (Neurospora crassa (strain ATCC 24698 / 74-OR23-1A / CBS 708.71 / DSM 1257 / FGSC 987)).